The primary structure comprises 33 residues: Photosystem II reaction center protein Psb30 (33 aa).

A helical transmembrane segment spans residues Leu5–Leu25.

This sequence belongs to the Psb30/Ycf12 family. In terms of assembly, PSII is composed of 1 copy each of membrane proteins PsbA, PsbB, PsbC, PsbD, PsbE, PsbF, PsbH, PsbI, PsbJ, PsbK, PsbL, PsbM, PsbT, PsbY, PsbZ, Psb30/Ycf12, peripheral proteins of the oxygen-evolving complex and a large number of cofactors. It forms dimeric complexes.

The protein resides in the plastid. It is found in the chloroplast thylakoid membrane. Functionally, a core subunit of photosystem II (PSII), probably helps stabilize the reaction center. The polypeptide is Photosystem II reaction center protein Psb30 (Euglena stellata).